Here is a 173-residue protein sequence, read N- to C-terminus: Lens fiber membrane intrinsic protein (173 aa).

Residues methionine 1–serine 3 lie on the Cytoplasmic side of the membrane. The helical transmembrane segment at phenylalanine 4–alanine 24 threads the bilayer. Topologically, residues threonine 25–alanine 66 are extracellular. Tryptophan 43 and tryptophan 61 each carry a C-linked (Man) tryptophan glycan. The N-linked (GlcNAc...) asparagine glycan is linked to asparagine 62. The chain crosses the membrane as a helical span at residues phenylalanine 67 to alanine 87. The Cytoplasmic segment spans residues glutamine 88–proline 98. The chain crosses the membrane as a helical span at residues phenylalanine 99–tyrosine 119. Over threonine 120–tyrosine 140 the chain is Extracellular. Residues isoleucine 141 to tyrosine 161 form a helical membrane-spanning segment. At arginine 162 to arginine 173 the chain is on the cytoplasmic side. Threonine 171 is modified (phosphothreonine).

It belongs to the PMP-22/EMP/MP20 family. Seems to be associated with itself or another lens membrane component via disulfide bonds.

Its subcellular location is the membrane. Functionally, present in the thicker 16-17 nm junctions of mammalian lens fiber cells, where it may contribute to cell junctional organization. Acts as a receptor for calmodulin. May play an important role in both lens development and cataractogenesis. This Mus musculus (Mouse) protein is Lens fiber membrane intrinsic protein (Lim2).